A 152-amino-acid chain; its full sequence is Protein NrdI (152 aa).

The protein belongs to the NrdI family.

Functionally, probably involved in ribonucleotide reductase function. The protein is Protein NrdI of Mycolicibacterium vanbaalenii (strain DSM 7251 / JCM 13017 / BCRC 16820 / KCTC 9966 / NRRL B-24157 / PYR-1) (Mycobacterium vanbaalenii).